We begin with the raw amino-acid sequence, 360 residues long: Holliday junction branch migration complex subunit RuvB (360 aa).

The large ATPase domain (RuvB-L) stretch occupies residues 4–196 (HEEDLDQAEE…FGFTAHLEFY (193 aa)). ATP-binding positions include Leu-35, Arg-36, Gly-77, Lys-80, Thr-81, Thr-82, 143-145 (EDF), Arg-186, Tyr-196, and Arg-233. Thr-81 serves as a coordination point for Mg(2+). Residues 197–267 (EPDELDLIVQ…VAQDALDLYE (71 aa)) are small ATPAse domain (RuvB-S). A head domain (RuvB-H) region spans residues 270–360 (QLGLDRLDRG…PESDPPLFED (91 aa)). Arg-306, Arg-325, and Arg-330 together coordinate DNA.

It belongs to the RuvB family. Homohexamer. Forms an RuvA(8)-RuvB(12)-Holliday junction (HJ) complex. HJ DNA is sandwiched between 2 RuvA tetramers; dsDNA enters through RuvA and exits via RuvB. An RuvB hexamer assembles on each DNA strand where it exits the tetramer. Each RuvB hexamer is contacted by two RuvA subunits (via domain III) on 2 adjacent RuvB subunits; this complex drives branch migration. In the full resolvosome a probable DNA-RuvA(4)-RuvB(12)-RuvC(2) complex forms which resolves the HJ.

The protein localises to the cytoplasm. The enzyme catalyses ATP + H2O = ADP + phosphate + H(+). The RuvA-RuvB-RuvC complex processes Holliday junction (HJ) DNA during genetic recombination and DNA repair, while the RuvA-RuvB complex plays an important role in the rescue of blocked DNA replication forks via replication fork reversal (RFR). RuvA specifically binds to HJ cruciform DNA, conferring on it an open structure. The RuvB hexamer acts as an ATP-dependent pump, pulling dsDNA into and through the RuvAB complex. RuvB forms 2 homohexamers on either side of HJ DNA bound by 1 or 2 RuvA tetramers; 4 subunits per hexamer contact DNA at a time. Coordinated motions by a converter formed by DNA-disengaged RuvB subunits stimulates ATP hydrolysis and nucleotide exchange. Immobilization of the converter enables RuvB to convert the ATP-contained energy into a lever motion, pulling 2 nucleotides of DNA out of the RuvA tetramer per ATP hydrolyzed, thus driving DNA branch migration. The RuvB motors rotate together with the DNA substrate, which together with the progressing nucleotide cycle form the mechanistic basis for DNA recombination by continuous HJ branch migration. Branch migration allows RuvC to scan DNA until it finds its consensus sequence, where it cleaves and resolves cruciform DNA. The sequence is that of Holliday junction branch migration complex subunit RuvB from Nocardioides sp. (strain ATCC BAA-499 / JS614).